The sequence spans 121 residues: Large ribosomal subunit protein bL12 (121 aa).

This sequence belongs to the bacterial ribosomal protein bL12 family. Homodimer. Part of the ribosomal stalk of the 50S ribosomal subunit. Forms a multimeric L10(L12)X complex, where L10 forms an elongated spine to which 2 to 4 L12 dimers bind in a sequential fashion. Binds GTP-bound translation factors.

Forms part of the ribosomal stalk which helps the ribosome interact with GTP-bound translation factors. Is thus essential for accurate translation. The polypeptide is Large ribosomal subunit protein bL12 (Leuconostoc mesenteroides subsp. mesenteroides (strain ATCC 8293 / DSM 20343 / BCRC 11652 / CCM 1803 / JCM 6124 / NCDO 523 / NBRC 100496 / NCIMB 8023 / NCTC 12954 / NRRL B-1118 / 37Y)).